The following is a 126-amino-acid chain: Fluoride-specific ion channel FluC (126 aa).

Transmembrane regions (helical) follow at residues 2–22, 37–57, 65–85, and 99–119; these read LITV…RYLI, VGVL…VVLA, LSPF…AFSL, and AALY…LGMM. Residues G75 and T78 each coordinate Na(+).

The protein belongs to the fluoride channel Fluc/FEX (TC 1.A.43) family.

Its subcellular location is the cell inner membrane. The catalysed reaction is fluoride(in) = fluoride(out). With respect to regulation, na(+) is not transported, but it plays an essential structural role and its presence is essential for fluoride channel function. Fluoride-specific ion channel. Important for reducing fluoride concentration in the cell, thus reducing its toxicity. In Ruegeria sp. (strain TM1040) (Silicibacter sp.), this protein is Fluoride-specific ion channel FluC.